Consider the following 194-residue polypeptide: Fe/S biogenesis protein NfuA (194 aa).

2 residues coordinate [4Fe-4S] cluster: C151 and C154.

The protein belongs to the NfuA family. Homodimer. It depends on [4Fe-4S] cluster as a cofactor.

In terms of biological role, involved in iron-sulfur cluster biogenesis. Binds a 4Fe-4S cluster, can transfer this cluster to apoproteins, and thereby intervenes in the maturation of Fe/S proteins. Could also act as a scaffold/chaperone for damaged Fe/S proteins. The chain is Fe/S biogenesis protein NfuA from Vibrio vulnificus (strain CMCP6).